The chain runs to 130 residues: Small ribosomal subunit protein uS11c (130 aa).

The protein belongs to the universal ribosomal protein uS11 family. In terms of assembly, part of the 30S ribosomal subunit.

The protein resides in the plastid. The protein localises to the chloroplast. The sequence is that of Small ribosomal subunit protein uS11c from Drimys granadensis.